The sequence spans 310 residues: Phosphoribosylaminoimidazole-succinocarboxamide synthase (310 aa).

Belongs to the SAICAR synthetase family.

It carries out the reaction 5-amino-1-(5-phospho-D-ribosyl)imidazole-4-carboxylate + L-aspartate + ATP = (2S)-2-[5-amino-1-(5-phospho-beta-D-ribosyl)imidazole-4-carboxamido]succinate + ADP + phosphate + 2 H(+). The protein operates within purine metabolism; IMP biosynthesis via de novo pathway; 5-amino-1-(5-phospho-D-ribosyl)imidazole-4-carboxamide from 5-amino-1-(5-phospho-D-ribosyl)imidazole-4-carboxylate: step 1/2. The protein is Phosphoribosylaminoimidazole-succinocarboxamide synthase of Cytophaga hutchinsonii (strain ATCC 33406 / DSM 1761 / CIP 103989 / NBRC 15051 / NCIMB 9469 / D465).